The chain runs to 485 residues: Glutamyl-tRNA(Gln) amidotransferase subunit A (485 aa).

Active-site charge relay system residues include Lys78 and Ser153. Ser177 serves as the catalytic Acyl-ester intermediate.

The protein belongs to the amidase family. GatA subfamily. In terms of assembly, heterotrimer of A, B and C subunits.

The catalysed reaction is L-glutamyl-tRNA(Gln) + L-glutamine + ATP + H2O = L-glutaminyl-tRNA(Gln) + L-glutamate + ADP + phosphate + H(+). Functionally, allows the formation of correctly charged Gln-tRNA(Gln) through the transamidation of misacylated Glu-tRNA(Gln) in organisms which lack glutaminyl-tRNA synthetase. The reaction takes place in the presence of glutamine and ATP through an activated gamma-phospho-Glu-tRNA(Gln). This chain is Glutamyl-tRNA(Gln) amidotransferase subunit A, found in Bacillus cytotoxicus (strain DSM 22905 / CIP 110041 / 391-98 / NVH 391-98).